We begin with the raw amino-acid sequence, 414 residues long: L-cysteine:1D-myo-inositol 2-amino-2-deoxy-alpha-D-glucopyranoside ligase (414 aa).

A disordered region spans residues 1 to 38; sequence MRSWPAPEVPNLPEAGLPGPALPLHLHDTATGTVRPTR. The segment covering 11 to 38 has biased composition (low complexity); it reads NLPEAGLPGPALPLHLHDTATGTVRPTR. Cys-48 is a Zn(2+) binding site. L-cysteinyl-5'-AMP contacts are provided by residues 48–51, Thr-63, and 86–88; these read CGIT and NVT. The short motif at 50–60 is the 'HIGH' region element; it reads ITPYDATHLGH. Positions 188–193 match the 'ERGGDP' region motif; sequence ERGGDP. Trp-228 is an L-cysteinyl-5'-AMP binding site. Cys-232 contacts Zn(2+). 250–252 contributes to the L-cysteinyl-5'-AMP binding site; that stretch reads GSD. Residue His-257 participates in Zn(2+) binding. Residue Val-284 participates in L-cysteinyl-5'-AMP binding. A 'KMSKS' region motif is present at residues 290–294; the sequence is KMSKS.

This sequence belongs to the class-I aminoacyl-tRNA synthetase family. MshC subfamily. Monomer. Zn(2+) is required as a cofactor.

The catalysed reaction is 1D-myo-inositol 2-amino-2-deoxy-alpha-D-glucopyranoside + L-cysteine + ATP = 1D-myo-inositol 2-(L-cysteinylamino)-2-deoxy-alpha-D-glucopyranoside + AMP + diphosphate + H(+). In terms of biological role, catalyzes the ATP-dependent condensation of GlcN-Ins and L-cysteine to form L-Cys-GlcN-Ins. The polypeptide is L-cysteine:1D-myo-inositol 2-amino-2-deoxy-alpha-D-glucopyranoside ligase (Thermomonospora curvata (strain ATCC 19995 / DSM 43183 / JCM 3096 / KCTC 9072 / NBRC 15933 / NCIMB 10081 / Henssen B9)).